We begin with the raw amino-acid sequence, 367 residues long: Anhydro-N-acetylmuramic acid kinase (367 aa).

13–20 (GTSMDGAD) is a binding site for ATP.

It belongs to the anhydro-N-acetylmuramic acid kinase family.

The enzyme catalyses 1,6-anhydro-N-acetyl-beta-muramate + ATP + H2O = N-acetyl-D-muramate 6-phosphate + ADP + H(+). It participates in amino-sugar metabolism; 1,6-anhydro-N-acetylmuramate degradation. It functions in the pathway cell wall biogenesis; peptidoglycan recycling. In terms of biological role, catalyzes the specific phosphorylation of 1,6-anhydro-N-acetylmuramic acid (anhMurNAc) with the simultaneous cleavage of the 1,6-anhydro ring, generating MurNAc-6-P. Is required for the utilization of anhMurNAc either imported from the medium or derived from its own cell wall murein, and thus plays a role in cell wall recycling. This chain is Anhydro-N-acetylmuramic acid kinase, found in Neisseria meningitidis serogroup C / serotype 2a (strain ATCC 700532 / DSM 15464 / FAM18).